Reading from the N-terminus, the 301-residue chain is Sulfate adenylyltransferase subunit 2 (301 aa).

The protein belongs to the PAPS reductase family. CysD subfamily. As to quaternary structure, heterodimer composed of CysD, the smaller subunit, and CysN.

The catalysed reaction is sulfate + ATP + H(+) = adenosine 5'-phosphosulfate + diphosphate. It functions in the pathway sulfur metabolism; hydrogen sulfide biosynthesis; sulfite from sulfate: step 1/3. With CysN forms the ATP sulfurylase (ATPS) that catalyzes the adenylation of sulfate producing adenosine 5'-phosphosulfate (APS) and diphosphate, the first enzymatic step in sulfur assimilation pathway. APS synthesis involves the formation of a high-energy phosphoric-sulfuric acid anhydride bond driven by GTP hydrolysis by CysN coupled to ATP hydrolysis by CysD. The polypeptide is Sulfate adenylyltransferase subunit 2 (Geobacter metallireducens (strain ATCC 53774 / DSM 7210 / GS-15)).